The chain runs to 129 residues: Thylakoid-associated single-stranded DNA-binding protein slr1034 (129 aa).

One can recognise an SSB domain in the interval 1–100 (MNSFVLMATV…LTASRISLVD (100 aa)). The segment at 99–129 (VDSGNGINPGELSSPPEPEAVDLSNTDDIPF) is disordered.

In terms of assembly, homotetramer.

It is found in the cellular thylakoid membrane. The protein is Thylakoid-associated single-stranded DNA-binding protein slr1034 of Synechocystis sp. (strain ATCC 27184 / PCC 6803 / Kazusa).